We begin with the raw amino-acid sequence, 398 residues long: NADH-quinone oxidoreductase subunit D (398 aa).

This sequence belongs to the complex I 49 kDa subunit family. In terms of assembly, NDH-1 is composed of 14 different subunits. Subunits NuoB, C, D, E, F, and G constitute the peripheral sector of the complex.

The protein resides in the cell inner membrane. The enzyme catalyses a quinone + NADH + 5 H(+)(in) = a quinol + NAD(+) + 4 H(+)(out). Functionally, NDH-1 shuttles electrons from NADH, via FMN and iron-sulfur (Fe-S) centers, to quinones in the respiratory chain. The immediate electron acceptor for the enzyme in this species is believed to be ubiquinone. Couples the redox reaction to proton translocation (for every two electrons transferred, four hydrogen ions are translocated across the cytoplasmic membrane), and thus conserves the redox energy in a proton gradient. The sequence is that of NADH-quinone oxidoreductase subunit D from Rhodospirillum centenum (strain ATCC 51521 / SW).